A 237-amino-acid polypeptide reads, in one-letter code: Phosphoadenosine 5'-phosphosulfate reductase (237 aa).

Catalysis depends on Cys231, which acts as the Nucleophile; cysteine thiosulfonate intermediate.

This sequence belongs to the PAPS reductase family. CysH subfamily.

The protein resides in the cytoplasm. It catalyses the reaction [thioredoxin]-disulfide + sulfite + adenosine 3',5'-bisphosphate + 2 H(+) = [thioredoxin]-dithiol + 3'-phosphoadenylyl sulfate. It participates in sulfur metabolism; hydrogen sulfide biosynthesis; sulfite from sulfate: step 3/3. Functionally, catalyzes the formation of sulfite from phosphoadenosine 5'-phosphosulfate (PAPS) using thioredoxin as an electron donor. This chain is Phosphoadenosine 5'-phosphosulfate reductase, found in Xylella fastidiosa (strain M23).